The chain runs to 287 residues: Transmembrane protein 163 (287 aa).

A disordered region spans residues 1–63; the sequence is METAAGSERR…ESGQFSDGLE (63 aa). Residues 1 to 86 lie on the Cytoplasmic side of the membrane; sequence METAAGSERR…HEAQNYRKKA (86 aa). S11, S53, S55, and S59 each carry phosphoserine. The tract at residues 40-70 is required for interaction with MCOLN1; sequence EPPQPEEERQLRISESGQFSDGLEDRGLLES. The helical transmembrane segment at 87–107 threads the bilayer; that stretch reads LWVSWFSIIVTLALAVAAFTV. The Extracellular segment spans residues 108–114; the sequence is SVMRYSA. A helical transmembrane segment spans residues 115-135; sequence SAFGFAFDAILDVLSSAIVLW. The Cytoplasmic portion of the chain corresponds to 136-148; the sequence is RYSNAAAVHSAHR. Residues 149–169 traverse the membrane as a helical segment; it reads EYIACVILGVIFLLSSVCIVV. The Extracellular portion of the chain corresponds to 170-185; that stretch reads KAIHDLSTKLLPEVDD. The chain crosses the membrane as a helical span at residues 186–206; that stretch reads FLFSVSILSGILCSILAVLKF. Topologically, residues 207–215 are cytoplasmic; that stretch reads MLGKVLTSR. The chain crosses the membrane as a helical span at residues 216–236; that stretch reads ALITDGFNSLVGGVMGFSILL. Residues 237–253 are Extracellular-facing; it reads SAEVFKHNSAVWYLDGS. Residues 254 to 274 form a helical membrane-spanning segment; that stretch reads IGVLIGLTIFAYGVKLLIDMV. Residues 275–287 lie on the Cytoplasmic side of the membrane; it reads PRVRQTRHYEMFE.

Belongs to the TMEM163 family. In terms of assembly, homodimer. Interacts with MCOLN1/TRPML1. Interacts with SLC30A1, SLC30A2, SLC30A3 and SLC30A4.

The protein resides in the cytoplasmic vesicle. The protein localises to the secretory vesicle. Its subcellular location is the synaptic vesicle membrane. It is found in the early endosome membrane. It localises to the late endosome membrane. The protein resides in the lysosome membrane. The protein localises to the cell membrane. It catalyses the reaction Zn(2+)(in) = Zn(2+)(out). In terms of biological role, zinc ion transporter that mediates zinc efflux and plays a crucial role in intracellular zinc homeostasis. Binds the divalent cations Zn(2+), Ni(2+), and to a minor extent Cu(2+). Is a functional modulator of P2X purinoceptors, including P2RX1, P2RX3, P2RX4 and P2RX7. Plays a role in central nervous system development and is required for myelination, and survival and proliferation of oligodendrocytes. The protein is Transmembrane protein 163 (TMEM163) of Bos taurus (Bovine).